The following is a 671-amino-acid chain: tRNA(Met) cytidine acetyltransferase TmcA (671 aa).

ATP-binding positions include Gln180, 202-211 (GRGKSALAGQ), and Arg319. The N-acetyltransferase domain occupies 356 to 531 (QTLWQSDPET…SGCYTAMALL (176 aa)). Acetyl-CoA contacts are provided by residues 461 to 463 (IAV), 468 to 474 (QREGTGR), Glu499, and Arg506.

This sequence belongs to the RNA cytidine acetyltransferase family. TmcA subfamily.

The protein resides in the cytoplasm. The catalysed reaction is cytidine(34) in elongator tRNA(Met) + acetyl-CoA + ATP + H2O = N(4)-acetylcytidine(34) in elongator tRNA(Met) + ADP + phosphate + CoA + H(+). It carries out the reaction 2-hydroxyisobutanoyl-CoA + L-lysyl-[protein] = N(6)-(2-hydroxyisobutanoyl)-L-lysyl-[protein] + CoA + H(+). With respect to regulation, ATP/GTP hydrolysis is stimulated by the addition of acetyl-CoA and tRNA(Met). Binding of acetyl-CoA to TmcA activates both ATPase and tRNA-binding activities. ATP promotes the 2-hydroxyisobutyryltransferase activity. Catalyzes the formation of N(4)-acetylcytidine (ac(4)C) at the wobble position of tRNA(Met), by using acetyl-CoA as an acetyl donor and ATP (or GTP). It recognizes the wobble base of tRNA(Met), thus distinguishing between tRNA(Met) and the structurally similar tRNA(Ile2). Could use an RNA helicase motor driven by ATP hydrolysis to deliver the wobble base of tRNA(Met) to the acetyltransferase domain of TmcA. Functionally, also functions as a lysine 2-hydroxyisobutyryltransferase to regulate transcription. Can specifically catalyze the 2-hydroxyisobutyrylation (Khib) of the DNA-binding protein H-NS. Hydroxyisobutyrylation of H-NS decreases its DNA-binding activity, promotes the expression of acid-resistance genes and enhances bacterial survival under extreme acid stress. The polypeptide is tRNA(Met) cytidine acetyltransferase TmcA (Escherichia coli (strain K12)).